The following is a 434-amino-acid chain: Enolase (434 aa).

Glutamine 163 is a binding site for (2R)-2-phosphoglycerate. The active-site Proton donor is glutamate 205. Residues aspartate 242, glutamate 291, and aspartate 318 each coordinate Mg(2+). The (2R)-2-phosphoglycerate site is built by lysine 343, arginine 372, serine 373, and lysine 394. Residue lysine 343 is the Proton acceptor of the active site.

It belongs to the enolase family. Mg(2+) is required as a cofactor.

The protein resides in the cytoplasm. The protein localises to the secreted. It localises to the cell surface. It catalyses the reaction (2R)-2-phosphoglycerate = phosphoenolpyruvate + H2O. It participates in carbohydrate degradation; glycolysis; pyruvate from D-glyceraldehyde 3-phosphate: step 4/5. Its function is as follows. Catalyzes the reversible conversion of 2-phosphoglycerate (2-PG) into phosphoenolpyruvate (PEP). It is essential for the degradation of carbohydrates via glycolysis. In Streptococcus intermedius, this protein is Enolase.